A 335-amino-acid polypeptide reads, in one-letter code: Ketol-acid reductoisomerase (NADP(+)) 2 (335 aa).

The KARI N-terminal Rossmann domain occupies 1–180 (MKTYYEKDAN…GCTRAGVIET (180 aa)). NADP(+) contacts are provided by residues 24–27 (YGSQ), R47, S51, and 81–84 (DEQQ). Residue H106 is part of the active site. Residue G132 participates in NADP(+) binding. Positions 181-326 (TFQEETETDL…AELREMMSWI (146 aa)) constitute a KARI C-terminal knotted domain. Mg(2+) contacts are provided by D189, E193, E225, and E229. S250 lines the substrate pocket.

It belongs to the ketol-acid reductoisomerase family. The cofactor is Mg(2+).

The catalysed reaction is (2R)-2,3-dihydroxy-3-methylbutanoate + NADP(+) = (2S)-2-acetolactate + NADPH + H(+). It carries out the reaction (2R,3R)-2,3-dihydroxy-3-methylpentanoate + NADP(+) = (S)-2-ethyl-2-hydroxy-3-oxobutanoate + NADPH + H(+). Its pathway is amino-acid biosynthesis; L-isoleucine biosynthesis; L-isoleucine from 2-oxobutanoate: step 2/4. The protein operates within amino-acid biosynthesis; L-valine biosynthesis; L-valine from pyruvate: step 2/4. Its function is as follows. Involved in the biosynthesis of branched-chain amino acids (BCAA). Catalyzes an alkyl-migration followed by a ketol-acid reduction of (S)-2-acetolactate (S2AL) to yield (R)-2,3-dihydroxy-isovalerate. In the isomerase reaction, S2AL is rearranged via a Mg-dependent methyl migration to produce 3-hydroxy-3-methyl-2-ketobutyrate (HMKB). In the reductase reaction, this 2-ketoacid undergoes a metal-dependent reduction by NADPH to yield (R)-2,3-dihydroxy-isovalerate. This chain is Ketol-acid reductoisomerase (NADP(+)) 2, found in Bacillus cereus (strain ZK / E33L).